A 223-amino-acid polypeptide reads, in one-letter code: Chalcone--flavanone isomerase 2 (223 aa).

Positions 41, 106, and 183 each coordinate substrate.

Belongs to the chalcone isomerase family.

It catalyses the reaction a chalcone = a flavanone.. The protein operates within secondary metabolite biosynthesis; flavonoid biosynthesis. Its function is as follows. Catalyzes the intramolecular cyclization of bicyclic chalcones into tricyclic (S)-flavanones. Responsible for the isomerization of 4,2',4',6'-tetrahydroxychalcone (also termed chalcone) into naringenin. This chain is Chalcone--flavanone isomerase 2 (CHI2), found in Arabidopsis thaliana (Mouse-ear cress).